Here is a 255-residue protein sequence, read N- to C-terminus: Tryptophan synthase alpha chain (255 aa).

Active-site proton acceptor residues include Glu-42 and Asp-53.

It belongs to the TrpA family. As to quaternary structure, tetramer of two alpha and two beta chains.

The enzyme catalyses (1S,2R)-1-C-(indol-3-yl)glycerol 3-phosphate + L-serine = D-glyceraldehyde 3-phosphate + L-tryptophan + H2O. The protein operates within amino-acid biosynthesis; L-tryptophan biosynthesis; L-tryptophan from chorismate: step 5/5. In terms of biological role, the alpha subunit is responsible for the aldol cleavage of indoleglycerol phosphate to indole and glyceraldehyde 3-phosphate. The chain is Tryptophan synthase alpha chain from Wolinella succinogenes (strain ATCC 29543 / DSM 1740 / CCUG 13145 / JCM 31913 / LMG 7466 / NCTC 11488 / FDC 602W) (Vibrio succinogenes).